A 659-amino-acid chain; its full sequence is L-type lectin-domain containing receptor kinase V.7 (659 aa).

The signal sequence occupies residues 1 to 25; the sequence is MSHKVLQIVLVLLLTLFSSTHNSNG. The legume-lectin like stretch occupies residues 22–244; sequence NSNGNFLMEE…GALYYVMQFS (223 aa). Residues 26 to 275 are Extracellular-facing; sequence NFLMEEAAAA…PKKSYDRTRR (250 aa). 4 N-linked (GlcNAc...) asparagine glycosylation sites follow: Asn-45, Asn-64, Asn-110, and Asn-192. Residues 276 to 296 traverse the membrane as a helical segment; that stretch reads ILAVCLTLAVFTALVASGIGF. The Cytoplasmic portion of the chain corresponds to 297–659; the sequence is VFYVRHKKVK…LTNSFVSHGR (363 aa). Positions 333 to 595 constitute a Protein kinase domain; it reads FKEKQLLGKG…GLLCAHHTEL (263 aa). Residues 339 to 347 and Lys-362 each bind ATP; that span reads LGKGGFGQV. Asp-462 (proton acceptor) is an active-site residue.

The protein in the C-terminal section; belongs to the protein kinase superfamily. Ser/Thr protein kinase family. This sequence in the N-terminal section; belongs to the leguminous lectin family.

It is found in the cell membrane. The enzyme catalyses L-seryl-[protein] + ATP = O-phospho-L-seryl-[protein] + ADP + H(+). It catalyses the reaction L-threonyl-[protein] + ATP = O-phospho-L-threonyl-[protein] + ADP + H(+). Its function is as follows. Involved in resistance response to the pathogenic oomycetes Phytophthora infestans and Phytophthora capsici and to the pathogenic bacteria Pseudomonas syringae. The sequence is that of L-type lectin-domain containing receptor kinase V.7 from Arabidopsis thaliana (Mouse-ear cress).